Reading from the N-terminus, the 206-residue chain is HTH-type transcriptional regulator Hpr (206 aa).

The region spanning 13–157 is the HTH marR-type domain; it reads ALLFSQRMAQ…MMCIIRNIYG (145 aa). Residues 63–86 constitute a DNA-binding region (H-T-H motif); it reads ISEIAKFGVMHVSTAFNFSKKLEE. The disordered stretch occupies residues 186–206; it reads SEELEDSADAAEKAAKANQIV.

Homodimer.

Functionally, negative regulator of protease production and sporulation. This is HTH-type transcriptional regulator Hpr from Bacillus pumilus (strain SAFR-032).